Here is a 747-residue protein sequence, read N- to C-terminus: Tripartite terminase subunit 3 (747 aa).

The Nuclear localization signal signature appears at 194 to 198 (KRAKV). The short motif at 267–274 (VPRRHGKT) is the Walker A motif element. The Walker B motif signature appears at 361 to 366 (LLFVDE). Residue E366 is the For ATPase activity of the active site. Active-site for nuclease activity residues include D521, E593, and D722.

It belongs to the herpesviridae TRM3 protein family. As to quaternary structure, interacts with the terminase subunits TRM1 and TRM2. Interacts with portal protein.

The protein resides in the host nucleus. Functionally, component of the molecular motor that translocates viral genomic DNA in empty capsid during DNA packaging. Forms a tripartite terminase complex together with TRM1 and TRM2 in the host cytoplasm. Once the complex reaches the host nucleus, it interacts with the capsid portal vertex. This portal forms a ring in which genomic DNA is translocated into the capsid. TRM3 carries an RNase H-like nuclease activity that plays an important role for the cleavage of concatemeric viral DNA into unit length genomes. In Homo sapiens (Human), this protein is Tripartite terminase subunit 3.